A 404-amino-acid polypeptide reads, in one-letter code: Formate-dependent phosphoribosylglycinamide formyltransferase (404 aa).

N(1)-(5-phospho-beta-D-ribosyl)glycinamide is bound by residues 25 to 26 and E85; that span reads EL. ATP contacts are provided by residues R118, K159, 164–169, 199–202, and E207; these read SSGKGQ and EGFI. In terms of domain architecture, ATP-grasp spans 123 to 318; sequence RLAAEELGLA…EFELHARAIL (196 aa). Residues E277 and E289 each coordinate Mg(2+). Residues D296, K365, and 372-373 each bind N(1)-(5-phospho-beta-D-ribosyl)glycinamide; that span reads RR.

The protein belongs to the PurK/PurT family. As to quaternary structure, homodimer.

The catalysed reaction is N(1)-(5-phospho-beta-D-ribosyl)glycinamide + formate + ATP = N(2)-formyl-N(1)-(5-phospho-beta-D-ribosyl)glycinamide + ADP + phosphate + H(+). It participates in purine metabolism; IMP biosynthesis via de novo pathway; N(2)-formyl-N(1)-(5-phospho-D-ribosyl)glycinamide from N(1)-(5-phospho-D-ribosyl)glycinamide (formate route): step 1/1. Involved in the de novo purine biosynthesis. Catalyzes the transfer of formate to 5-phospho-ribosyl-glycinamide (GAR), producing 5-phospho-ribosyl-N-formylglycinamide (FGAR). Formate is provided by PurU via hydrolysis of 10-formyl-tetrahydrofolate. The protein is Formate-dependent phosphoribosylglycinamide formyltransferase of Burkholderia vietnamiensis (strain G4 / LMG 22486) (Burkholderia cepacia (strain R1808)).